Consider the following 511-residue polypeptide: Probable Xaa-Pro aminopeptidase MAA_08947 (511 aa).

Asp275, Asp286, Glu439, and Glu480 together coordinate Mn(2+).

This sequence belongs to the peptidase M24B family. Mn(2+) serves as cofactor.

It catalyses the reaction Release of any N-terminal amino acid, including proline, that is linked to proline, even from a dipeptide or tripeptide.. In terms of biological role, catalyzes the removal of a penultimate prolyl residue from the N-termini of peptides. The sequence is that of Probable Xaa-Pro aminopeptidase MAA_08947 from Metarhizium robertsii (strain ARSEF 23 / ATCC MYA-3075) (Metarhizium anisopliae (strain ARSEF 23)).